Consider the following 497-residue polypeptide: uncharacterized protein (497 aa).

ABC transporter domains are found at residues 9–247 and 256–496; these read VSVR…MGQA and ARPA…TGMA. 41–48 lines the ATP pocket; sequence GGNGAGKS.

Belongs to the ABC transporter superfamily. Ribose importer (TC 3.A.1.2.1) family.

It is found in the cell membrane. Probably part of the binding-protein-dependent transport system y4mIJK. This system probably transports a sugar. Probably responsible for energy coupling to the transport system. This is an uncharacterized protein from Sinorhizobium fredii (strain NBRC 101917 / NGR234).